The sequence spans 412 residues: UPF0761 membrane protein lpg0643 (412 aa).

The next 6 membrane-spanning stretches (helical) occupy residues 36 to 56 (ALAF…LAIF), 99 to 119 (LSIW…FTIE), 137 to 157 (AFLL…LSLA), 177 to 197 (ILHY…YVVV), 210 to 230 (GGLV…YYLI), and 241 to 261 (AFAT…ITLL).

The protein belongs to the UPF0761 family.

It is found in the cell inner membrane. This is UPF0761 membrane protein lpg0643 from Legionella pneumophila subsp. pneumophila (strain Philadelphia 1 / ATCC 33152 / DSM 7513).